The chain runs to 238 residues: tRNA (guanine-N(7)-)-methyltransferase (238 aa).

S-adenosyl-L-methionine-binding residues include E68, E93, D120, and D143. The active site involves D143. Substrate-binding positions include K147, D179, and 216-219 (TKFE).

The protein belongs to the class I-like SAM-binding methyltransferase superfamily. TrmB family.

The enzyme catalyses guanosine(46) in tRNA + S-adenosyl-L-methionine = N(7)-methylguanosine(46) in tRNA + S-adenosyl-L-homocysteine. Its pathway is tRNA modification; N(7)-methylguanine-tRNA biosynthesis. Catalyzes the formation of N(7)-methylguanine at position 46 (m7G46) in tRNA. The protein is tRNA (guanine-N(7)-)-methyltransferase of Shewanella baltica (strain OS195).